We begin with the raw amino-acid sequence, 138 residues long: Large ribosomal subunit protein eL27 (138 aa).

It belongs to the eukaryotic ribosomal protein eL27 family.

In Solanum tuberosum (Potato), this protein is Large ribosomal subunit protein eL27 (RPL27).